A 1127-amino-acid chain; its full sequence is MASKGILKNGGKPPTAPSSAAPTVVFGRRTDSGRFISYSRDDLDSEISSVDFQDYHVHIPMTPDNQPMDPAAGDEQQYVSSSLFTGGFNSVTRAHVMEKQASSARATVSACMVQGCGSKIMRNGRGADILPCECDFKICVDCFTDAVKGGGGVCPGCKEPYKHAEWEEVVSASNHDAINRALSLPHGHGHGPKMERRLSLVKQNGGAPGEFDHNRWLFETKGTYGYGNAIWPEDDGVAGHPKELMSKPWRPLTRKLRIQAAVISPYRLLVLIRLVALGLFLMWRIKHQNEDAIWLWGMSIVCELWFALSWVLDQLPKLCPINRATDLSVLKDKFETPTPSNPTGKSDLPGIDIFVSTADPEKEPVLVTANTILSILAADYPVDKLACYVSDDGGALLTFEAMAEAASFANLWVPFCRKHEIEPRNPDSYFNLKRDPFKNKVKGDFVKDRRRVKREYDEFKVRVNGLPDAIRRRSDAYHAREEIQAMNLQREKMKAGGDEQQLEPIKIPKATWMADGTHWPGTWLQASPEHARGDHAGIIQVMLKPPSPSPSSSGGDMEKRVDLSGVDTRLPMLVYVSREKRPGYDHNKKAGAMNALVRASAIMSNGPFILNLDCDHYVYNSKAFREGMCFMMDRGGDRLCYVQFPQRFEGIDPSDRYANHNTVFFDVNMRALDGLQGPVYVGTGCLFRRIALYGFDPPRSKDHTTPWSCCLPRRRRTRSQPQPQEEEEETMALRMDMDGAMNMASFPKKFGNSSFLIDSIPVAEFQGRPLADHPSVKNGRPPGALTIPRETLDASIVAEAISVVSCWYEEKTEWGTRVGWIYGSVTEDVVTGYRMHNRGWKSVYCVTHRDAFRGTAPINLTDRLHQVLRWATGSVEIFFSRNNALFASSKMKVLQRIAYLNVGIYPFTSVFLIVYCFLPALSLFSGQFIVQTLNVTFLTYLLIITITLCLLAMLEIKWSGIALEEWWRNEQFWLIGGTSAHLAAVLQGLLKVIAGIEISFTLTSKQLGDDVDDEFAELYAVKWTSLMIPPLTIIMINLVAIAVGFSRTIYSTIPQWSKLLGGVFFSFWVLAHLYPFAKGLMGRRGRTPTIVYVWSGLVAITISLLWIAIKPPSAQANSQLGGSFSFP.

The disordered stretch occupies residues 1-24 (MASKGILKNGGKPPTAPSSAAPTV). A run of 2 helical transmembrane segments spans residues 262 to 282 (VISP…LFLM) and 292 to 312 (AIWL…SWVL). Active-site residues include aspartate 392 and aspartate 828. 6 helical membrane passes run 910 to 930 (VFLI…QFIV), 936 to 956 (TFLT…MLEI), 982 to 1002 (LAAV…SFTL), 1025 to 1045 (SLMI…AVGF), 1059 to 1079 (LLGG…FAKG), and 1089 to 1109 (TIVY…WIAI).

The protein belongs to the glycosyltransferase 2 family. Plant cellulose synthase-like D subfamily.

The protein localises to the golgi apparatus membrane. In terms of biological role, thought to be a Golgi-localized beta-glycan synthase that polymerize the backbones of noncellulosic polysaccharides (hemicelluloses) of plant cell wall. This Oryza sativa subsp. indica (Rice) protein is Cellulose synthase-like protein D1 (CSLD1).